The chain runs to 386 residues: Ovalbumin (386 aa).

The residue at position 2 (Gly2) is an N-acetylglycine. Residues 22–48 (HHANENIFYSPFTIISALAMVYLGAKD) constitute a signal peptide (not cleaved). Ser69 is subject to Phosphoserine. A disulfide bond links Cys74 and Cys121. 2 N-linked (GlcNAc...) asparagine glycosylation sites follow: Asn293 and Asn312. Ser345 is modified (phosphoserine). The N-linked (GlcNAc...) asparagine glycan is linked to Asn372.

The protein belongs to the serpin family. Ov-serpin subfamily. Post-translationally, the signal sequence is not cleaved. The functional signal for membrane translocation of ovalbumin becomes accessible when the nascent chain is 50 to 60 residues long. The hydrophobic sequence which lies between residues 27 and 43 folds back on the preceding residues to form an amphipathic hairpin structure which is the signal element recognized by the membrane. Major protein of egg white.

The protein resides in the secreted. Its function is as follows. Storage protein of egg white. Lack protease inhibitory activity. In Meleagris gallopavo (Wild turkey), this protein is Ovalbumin (SERPINB14).